Here is a 249-residue protein sequence, read N- to C-terminus: Methylthioribulose-1-phosphate dehydratase (249 aa).

The disordered stretch occupies residues 1–25; it reads MVDIKPEQTQEGNNNDHLVQSDDPE. Residues 9-18 are compositionally biased toward polar residues; the sequence is TQEGNNNDHL. Position 105 (Cys-105) interacts with substrate. Zn(2+)-binding residues include His-122 and His-124. Glu-151 functions as the Proton donor/acceptor in the catalytic mechanism. Position 207 (His-207) interacts with Zn(2+).

Belongs to the aldolase class II family. MtnB subfamily. Zn(2+) is required as a cofactor.

It localises to the cytoplasm. The enzyme catalyses 5-(methylsulfanyl)-D-ribulose 1-phosphate = 5-methylsulfanyl-2,3-dioxopentyl phosphate + H2O. It functions in the pathway amino-acid biosynthesis; L-methionine biosynthesis via salvage pathway; L-methionine from S-methyl-5-thio-alpha-D-ribose 1-phosphate: step 2/6. In terms of biological role, catalyzes the dehydration of methylthioribulose-1-phosphate (MTRu-1-P) into 2,3-diketo-5-methylthiopentyl-1-phosphate (DK-MTP-1-P). The protein is Methylthioribulose-1-phosphate dehydratase of Arthroderma otae (strain ATCC MYA-4605 / CBS 113480) (Microsporum canis).